Consider the following 73-residue polypeptide: Translation initiation factor IF-1 1 (73 aa).

The S1-like domain occupies 1–72 (MAKEELIEFG…TKGRINFRHK (72 aa)).

Belongs to the IF-1 family. Component of the 30S ribosomal translation pre-initiation complex which assembles on the 30S ribosome in the order IF-2 and IF-3, IF-1 and N-formylmethionyl-tRNA(fMet); mRNA recruitment can occur at any time during PIC assembly.

It localises to the cytoplasm. One of the essential components for the initiation of protein synthesis. Stabilizes the binding of IF-2 and IF-3 on the 30S subunit to which N-formylmethionyl-tRNA(fMet) subsequently binds. Helps modulate mRNA selection, yielding the 30S pre-initiation complex (PIC). Upon addition of the 50S ribosomal subunit IF-1, IF-2 and IF-3 are released leaving the mature 70S translation initiation complex. In Cupriavidus pinatubonensis (strain JMP 134 / LMG 1197) (Cupriavidus necator (strain JMP 134)), this protein is Translation initiation factor IF-1 1.